Reading from the N-terminus, the 173-residue chain is Skp-like protein (173 aa).

Positions 1-19 (MKKFLLLSLMSLASSTVFA) are cleaved as a signal peptide.

Belongs to the Skp family.

This is Skp-like protein from Chlamydia muridarum (strain MoPn / Nigg).